The chain runs to 116 residues: UPF0102 protein LBJ_1427 (116 aa).

This sequence belongs to the UPF0102 family.

This Leptospira borgpetersenii serovar Hardjo-bovis (strain JB197) protein is UPF0102 protein LBJ_1427.